A 680-amino-acid polypeptide reads, in one-letter code: Probable inactive DNA (cytosine-5)-methyltransferase DRM3 (680 aa).

Residues 1-24 form a disordered region; it reads MVKVEDDVEGSGINASVGDLRDAA. In terms of domain architecture, UBA 1 spans 45 to 86; the sequence is SSSSHVRSQFIGMGFSPMLVDRVLQKHGDRDSDTILEALLSQ. The interval 91-113 is disordered; the sequence is KSGSESGSLGDLFDSDNEENSSH. Positions 194–235 constitute a UBA 2 domain; sequence SLFGVMDKTLHLLQMGFTEEEVSSVIDKAGPEATVLELADTI. Residues 336–663 enclose the SAM-dependent MTase DRM-type domain; it reads IRRNVRSDVA…QRVKHIMGRL (328 aa).

It belongs to the class I-like SAM-binding methyltransferase superfamily. DRM-methyltransferase family.

It localises to the nucleus. In terms of biological role, involved in de novo DNA methylation. Involved in RNA-directed DNA methylation (RdDM). This chain is Probable inactive DNA (cytosine-5)-methyltransferase DRM3, found in Oryza sativa subsp. japonica (Rice).